We begin with the raw amino-acid sequence, 526 residues long: Meiotically up-regulated gene 99 protein, mitochondrial (526 aa).

A run of 2 helical transmembrane segments spans residues 398–418 (TLYTTAFQGLGALGSLYLYFV) and 421–441 (FSLYNAFSVFSVCGVFGLYYL).

Its subcellular location is the mitochondrion membrane. Functionally, required for correct meiotic chromosome segregation. Appears to also have role in sporulation. The protein is Meiotically up-regulated gene 99 protein, mitochondrial (mug99) of Schizosaccharomyces pombe (strain 972 / ATCC 24843) (Fission yeast).